Reading from the N-terminus, the 414-residue chain is MFNRQDTLAKTDPDLWAAIQQEDRRQQDHIELIASENYTSPAVMQAQGSQLTNKYAEGYPGKRYYGGCEYVDIVEQLAIDRVKALFGAEAANVQPNSGSQANQAVFMAFLKPGDTIMGMSLAEGGHLTHGMALNMSGKWFNVVAYGLNEKEEIDYEAMERLAREHKPKLIIAGASAYALRIDFERFAKIAKEIGAIFMVDMAHYAGLIAAGLYPNPVPHADVVTSTTHKTLRGPRGGIILMKAEHEKAINSAIFPGLQGGPLMHVIAGKATAFKEAATKDFKRYQEQVIDNALVMCKVLVERGLRIISGRTESHVFLVDLRAKNLTGKEAEALLGRAHITVNKNAIPNDPQKPFVTSGIRIGTPAMTTRGFTELEAEQLAHLIADVLDAPNDEAVVERVKGEVAKLTAKFPVYG.

Residues Leu-121 and 125 to 127 (GHL) each bind (6S)-5,6,7,8-tetrahydrofolate. The residue at position 229 (Lys-229) is an N6-(pyridoxal phosphate)lysine.

Belongs to the SHMT family. In terms of assembly, homodimer. Pyridoxal 5'-phosphate is required as a cofactor.

It localises to the cytoplasm. It carries out the reaction (6R)-5,10-methylene-5,6,7,8-tetrahydrofolate + glycine + H2O = (6S)-5,6,7,8-tetrahydrofolate + L-serine. The protein operates within one-carbon metabolism; tetrahydrofolate interconversion. It participates in amino-acid biosynthesis; glycine biosynthesis; glycine from L-serine: step 1/1. In terms of biological role, catalyzes the reversible interconversion of serine and glycine with tetrahydrofolate (THF) serving as the one-carbon carrier. This reaction serves as the major source of one-carbon groups required for the biosynthesis of purines, thymidylate, methionine, and other important biomolecules. Also exhibits THF-independent aldolase activity toward beta-hydroxyamino acids, producing glycine and aldehydes, via a retro-aldol mechanism. The chain is Serine hydroxymethyltransferase from Thiobacillus denitrificans (strain ATCC 25259 / T1).